The following is a 115-amino-acid chain: uncharacterized protein (115 aa).

Residues 1 to 115 (MGVEISLDPP…ETVIKLSAAE (115 aa)) form the MSP domain.

This is an uncharacterized protein from Caenorhabditis elegans.